The following is a 481-amino-acid chain: Multiple inositol polyphosphate phosphatase 1 (481 aa).

A signal peptide spans 1-30 (MLRGARSHLPASVAPAAVLAAALLSSFARC). Histidine 89 is a catalytic residue. N-linked (GlcNAc...) asparagine glycosylation is found at asparagine 236 and asparagine 475. A Prevents secretion from ER motif is present at residues 478–481 (SDEL).

The protein belongs to the histidine acid phosphatase family. MINPP1 subfamily. Post-translationally, N-glycosylated. As to expression, widely expressed with highest levels in kidney, intestine, thymus and liver.

The protein resides in the endoplasmic reticulum lumen. Its subcellular location is the secreted. It localises to the cell membrane. It catalyses the reaction 1D-myo-inositol hexakisphosphate + H2O = 1D-myo-inositol 1,2,4,5,6-pentakisphosphate + phosphate. The catalysed reaction is 1D-myo-inositol 1,2,4,5,6-pentakisphosphate + H2O = 1D-myo-inositol 1,2,5,6-tetrakisphosphate + phosphate. It carries out the reaction 1D-myo-inositol 1,2,5,6-tetrakisphosphate + H2O = 1D-myo-inositol 1,2,6-trisphosphate + phosphate. The enzyme catalyses 1D-myo-inositol 1,2,6-trisphosphate + H2O = 1D-myo-inositol 1,2-bisphosphate + phosphate. It catalyses the reaction 1D-myo-inositol 1,2-bisphosphate + H2O = 1D-myo-inositol 2-phosphate + phosphate. The catalysed reaction is 1D-myo-inositol hexakisphosphate + H2O = 1D-myo-inositol 1,2,3,5,6-pentakisphosphate + phosphate. It carries out the reaction 1D-myo-inositol 1,2,3,5,6-pentakisphosphate + H2O = 1D-myo-inositol 1,2,3,6-tetrakisphosphate + phosphate. The enzyme catalyses 1D-myo-inositol 1,2,3,6-tetrakisphosphate + H2O = 1D-myo-inositol 1,2,3-trisphosphate + phosphate. It catalyses the reaction 1D-myo-inositol 1,2,3-trisphosphate + H2O = 1D-myo-inositol 2,3-bisphosphate + phosphate. The catalysed reaction is 1D-myo-inositol 2,3-bisphosphate + H2O = 1D-myo-inositol 2-phosphate + phosphate. It carries out the reaction 1D-myo-inositol 1,3,4,5,6-pentakisphosphate + H2O = 1D-myo-inositol 1,4,5,6-tetrakisphosphate + phosphate. The enzyme catalyses 1D-myo-inositol 1,4,5,6-tetrakisphosphate + H2O = 1D-myo-inositol 1,4,5-trisphosphate + phosphate. It catalyses the reaction (2R)-2,3-bisphosphoglycerate + H2O = (2R)-2-phosphoglycerate + phosphate. Multiple inositol polyphosphate phosphatase that hydrolyzes 1D-myo-inositol 1,3,4,5,6-pentakisphosphate (InsP5[2OH]) and 1D-myo-inositol hexakisphosphate (InsP6) to a range of less phosphorylated inositol phosphates. This regulates the availability of these various small molecule second messengers and metal chelators which control many aspects of cell physiology. Has a weak in vitro activity towards 1D-myo-inositol 1,4,5-trisphosphate which is unlikely to be physiologically relevant. By regulating intracellular inositol polyphosphates pools, which act as metal chelators, it may control the availability of intracellular calcium and iron, which are important for proper neuronal development and homeostasis. May have a dual substrate specificity, and function as a 2,3-bisphosphoglycerate 3-phosphatase hydrolyzing 2,3-bisphosphoglycerate to 2-phosphoglycerate. 2,3-bisphosphoglycerate (BPG) is formed as part of the Rapoport-Luebering glycolytic bypass and is a regulator of systemic oxygen homeostasis as the major allosteric effector of hemoglobin. The sequence is that of Multiple inositol polyphosphate phosphatase 1 from Mus musculus (Mouse).